A 423-amino-acid polypeptide reads, in one-letter code: Adenosylmethionine-8-amino-7-oxononanoate aminotransferase (423 aa).

Residue W51 coordinates substrate. 111–112 is a pyridoxal 5'-phosphate binding site; the sequence is GS. Y144 is a binding site for substrate. D243 is a binding site for pyridoxal 5'-phosphate. The substrate site is built by K272 and G306. Residue K272 is modified to N6-(pyridoxal phosphate)lysine. Pyridoxal 5'-phosphate is bound at residue 307-308; that stretch reads PT. Residue R390 participates in substrate binding.

This sequence belongs to the class-III pyridoxal-phosphate-dependent aminotransferase family. BioA subfamily. In terms of assembly, homodimer. Requires pyridoxal 5'-phosphate as cofactor.

Its subcellular location is the cytoplasm. It catalyses the reaction (8S)-8-amino-7-oxononanoate + S-adenosyl-L-methionine = S-adenosyl-4-methylsulfanyl-2-oxobutanoate + (7R,8S)-7,8-diammoniononanoate. It functions in the pathway cofactor biosynthesis; biotin biosynthesis; 7,8-diaminononanoate from 8-amino-7-oxononanoate (SAM route): step 1/1. Functionally, catalyzes the transfer of the alpha-amino group from S-adenosyl-L-methionine (SAM) to 7-keto-8-aminopelargonic acid (KAPA) to form 7,8-diaminopelargonic acid (DAPA). It is the only aminotransferase known to utilize SAM as an amino donor. This chain is Adenosylmethionine-8-amino-7-oxononanoate aminotransferase, found in Corynebacterium glutamicum (strain ATCC 13032 / DSM 20300 / JCM 1318 / BCRC 11384 / CCUG 27702 / LMG 3730 / NBRC 12168 / NCIMB 10025 / NRRL B-2784 / 534).